The primary structure comprises 161 residues: Vasotocin-neurophysin VT (161 aa).

The first 19 residues, 1–19, serve as a signal peptide directing secretion; sequence MAEPSLPLSFLCLLALSSA. A disulfide bond links cysteine 20 and cysteine 25. Glycine 28 bears the Glycine amide mark. 7 disulfides stabilise this stretch: cysteine 41–cysteine 85, cysteine 44–cysteine 58, cysteine 52–cysteine 75, cysteine 59–cysteine 65, cysteine 92–cysteine 104, cysteine 98–cysteine 116, and cysteine 105–cysteine 110.

Belongs to the vasopressin/oxytocin family. In terms of processing, seven disulfide bonds are present in neurophysin.

The protein resides in the secreted. In terms of biological role, vasotocin is an antidiuretic hormone. The polypeptide is Vasotocin-neurophysin VT (Gallus gallus (Chicken)).